A 451-amino-acid polypeptide reads, in one-letter code: Midnolin-B (451 aa).

One can recognise a Ubiquitin-like domain in the interval Met20 to Gly94. Disordered regions lie at residues Ala187–Lys254, Arg331–Asn372, and Gln388–Leu427. 3 stretches are compositionally biased toward low complexity: residues Thr190–Thr205, Ser237–Ser250, and Thr336–Thr347. Basic and acidic residues predominate over residues Ser363 to Asn372. The segment covering Gln388 to Arg397 has biased composition (basic residues). The span at Arg413–Ser426 shows a compositional bias: low complexity.

The protein localises to the nucleus. It localises to the cytoplasm. Its subcellular location is the cytosol. The protein resides in the nucleolus. Functionally, facilitates ubiquitin-independent proteasomal degradation of polycomb protein CBX4. Plays a role in inhibiting the activity of glucokinase GCK and both glucose-induced and basal insulin secretion. The polypeptide is Midnolin-B (midn-b) (Xenopus laevis (African clawed frog)).